A 288-amino-acid chain; its full sequence is Protein-S-isoprenylcysteine O-methyltransferase (288 aa).

The helical transmembrane segment at 13 to 29 (SIVSFTLGASVISLPLL) threads the bilayer. Over 30-45 (TSSFTEQTLLAAAPGR) the chain is Lumenal. The chain crosses the membrane as a helical span at residues 46-63 (IALVFFIAALNGLLLLLY). The Cytoplasmic portion of the chain corresponds to 64-73 (KAQLYQVAIR). Residues 74–91 (ASFLGFAFGCGLLLSITQ) form a helical membrane-spanning segment. Topologically, residues 92–96 (SPWKP) are lumenal. A helical membrane pass occupies residues 97–116 (FGWYVCSLSFFHYSEYLVTA). The Cytoplasmic segment spans residues 117 to 135 (MNNPRSLSIDSFLLNHSLE). The helical transmembrane segment at 136–153 (YTLAALSSWVEFTIETTI) threads the bilayer. The Lumenal portion of the chain corresponds to 154 to 158 (YPDLK). A helical transmembrane segment spans residues 159-178 (QITWLSVIGLIMVLFGEVLR). Over 179–216 (KCAMLTAGSNFNHIVQNEKSDSHTLVTSGVYSWFRHPS) the chain is Cytoplasmic. S-adenosyl-L-methionine is bound by residues Q194, 201–204 (HTLV), Y209, and 214–217 (HPSY). Residues 217–232 (YVGWFYWSIGTQVLLC) form a helical membrane-spanning segment. Residue N233 is a topological domain, lumenal. The helical transmembrane segment at 234–248 (PLCLVGYTLASWRFF) threads the bilayer. Topologically, residues 249–288 (SERIEEEEFSLIHFFGENYLEYKKKVPTGLPFIKGVKMEP) are cytoplasmic. R251 serves as a coordination point for substrate. E255 lines the S-adenosyl-L-methionine pocket.

This sequence belongs to the class VI-like SAM-binding methyltransferase superfamily. Isoprenylcysteine carboxyl methyltransferase family.

It localises to the endoplasmic reticulum membrane. It catalyses the reaction [protein]-C-terminal S-[(2E,6E)-farnesyl]-L-cysteine + S-adenosyl-L-methionine = [protein]-C-terminal S-[(2E,6E)-farnesyl]-L-cysteine methyl ester + S-adenosyl-L-homocysteine. Its function is as follows. Catalyzes the post-translational methylation of isoprenylated C-terminal cysteine residues. This chain is Protein-S-isoprenylcysteine O-methyltransferase (icmt), found in Xenopus laevis (African clawed frog).